Here is a 1174-residue protein sequence, read N- to C-terminus: PR domain zinc finger protein 15 (1174 aa).

Residues 75–185 (SNLEIRRLDD…AGTELRVWYA (111 aa)) enclose the SET domain. Residues 252 to 307 (LPAGGQQHEAASEKEPDAPRMEPPTAAESKSIQSVMVTKEPKKKPRRGRKPKASKV) are disordered. The segment covering 261-271 (AASEKEPDAPR) has biased composition (basic and acidic residues). Residues 292 to 304 (PKKKPRRGRKPKA) are compositionally biased toward basic residues. 2 consecutive C2H2-type zinc fingers follow at residues 402-424 (HQCG…VRSH) and 434-457 (FKCE…SYKH). A C2H2-type 3; degenerate zinc finger spans residues 468–486 (YRCGSCGKTFRMESALEFH). 2 C2H2-type zinc fingers span residues 495–517 (FQCE…KKKH) and 522–544 (FACE…QRRH). Lysine 552 participates in a covalent cross-link: Glycyl lysine isopeptide (Lys-Gly) (interchain with G-Cter in SUMO2). 2 C2H2-type zinc fingers span residues 571-593 (SGCP…LLTH) and 598-620 (YTCE…IHVH). Residues 639-658 (IGISSEENDDNSDESADSEP) are disordered. Positions 644-655 (EENDDNSDESAD) are enriched in acidic residues. C2H2-type zinc fingers lie at residues 661–684 (YSCK…MEVH), 689–711 (HGCS…MVIH), 725–747 (HPCE…KLIH), 753–775 (HACE…MRVH), 781–803 (YLCA…MKLH), 809–831 (YECK…YKRH), 837–859 (FMCE…KLIH), and 865–888 (WTCS…QLTH). Disordered regions lie at residues 957–1007 (AEGK…GDET) and 1147–1174 (LQPP…MYSY). Residues 962–973 (GKAAKRSHKRKQ) show a composition bias toward basic residues. Over residues 1154–1174 (AAPQQAVQPQVQNEQQQMYSY) the composition is skewed to low complexity.

Expressed in embryonic stem cells (ESCs) (at protein level).

The protein resides in the nucleus. Functionally, sequence-specific DNA-binding transcriptional regulator. Plays a role as a molecular node in a transcriptional network regulating embryonic development and cell fate decision. Stimulates the expression of upstream key transcriptional activators and repressors of the Wnt/beta-catenin and MAPK/ERK pathways, respectively, that are essential for naive pluripotency and self-renewal maintenance of embryonic stem cells (ESCs). Specifically promotes SPRY1 and RSPO1 transcription activation through recognition and direct binding of a specific DNA sequence in their promoter regions. Also plays a role in induced pluripotent stem cells (iPSCs) reprogramming. Involved in early embryo development. In Mus musculus (Mouse), this protein is PR domain zinc finger protein 15.